We begin with the raw amino-acid sequence, 122 residues long: MIQQETRLHVADNTGAKELLAIRVLGGSKRRYAGIGDVIVASVKDAIPGGSVKKGDVVKAVVVRTVKERRRADGSYIKFDENAAVILGSGREPKGTRIFGPVGRELRDKRFMRIVSLAPEVI.

This sequence belongs to the universal ribosomal protein uL14 family. In terms of assembly, part of the 50S ribosomal subunit. Forms a cluster with proteins L3 and L19. In the 70S ribosome, L14 and L19 interact and together make contacts with the 16S rRNA in bridges B5 and B8.

Its function is as follows. Binds to 23S rRNA. Forms part of two intersubunit bridges in the 70S ribosome. In Bifidobacterium animalis subsp. lactis (strain AD011), this protein is Large ribosomal subunit protein uL14.